A 489-amino-acid polypeptide reads, in one-letter code: 3-octaprenyl-4-hydroxybenzoate carboxy-lyase (489 aa).

Asparagine 172 is a binding site for Mn(2+). Prenylated FMN is bound by residues 175-177 (IYR), 189-191 (RWL), and 194-195 (RG). Position 238 (glutamate 238) interacts with Mn(2+). Residue aspartate 287 is the Proton donor of the active site.

It belongs to the UbiD family. As to quaternary structure, homohexamer. Requires prenylated FMN as cofactor. The cofactor is Mn(2+).

The protein resides in the cell membrane. It catalyses the reaction a 4-hydroxy-3-(all-trans-polyprenyl)benzoate + H(+) = a 2-(all-trans-polyprenyl)phenol + CO2. It participates in cofactor biosynthesis; ubiquinone biosynthesis. Its function is as follows. Catalyzes the decarboxylation of 3-octaprenyl-4-hydroxy benzoate to 2-octaprenylphenol, an intermediate step in ubiquinone biosynthesis. In Klebsiella pneumoniae (strain 342), this protein is 3-octaprenyl-4-hydroxybenzoate carboxy-lyase.